The following is a 160-amino-acid chain: Putative 4-hydroxy-4-methyl-2-oxoglutarate aldolase (160 aa).

Substrate contacts are provided by residues 75-78 (GDQL) and R97. D98 is an a divalent metal cation binding site.

Belongs to the class II aldolase/RraA-like family. As to quaternary structure, homotrimer. Requires a divalent metal cation as cofactor.

It catalyses the reaction 4-hydroxy-4-methyl-2-oxoglutarate = 2 pyruvate. It carries out the reaction oxaloacetate + H(+) = pyruvate + CO2. Its function is as follows. Catalyzes the aldol cleavage of 4-hydroxy-4-methyl-2-oxoglutarate (HMG) into 2 molecules of pyruvate. Also contains a secondary oxaloacetate (OAA) decarboxylase activity due to the common pyruvate enolate transition state formed following C-C bond cleavage in the retro-aldol and decarboxylation reactions. This is Putative 4-hydroxy-4-methyl-2-oxoglutarate aldolase from Vibrio parahaemolyticus serotype O3:K6 (strain RIMD 2210633).